The primary structure comprises 146 residues: uncharacterized protein (146 aa).

To E.coli YmfS.

This is an uncharacterized protein from Escherichia coli (strain K12).